Reading from the N-terminus, the 727-residue chain is Translation initiation factor IF-2, mitochondrial (727 aa).

Residues 1-29 (MNRKILKLENLLRFHTICRQLHSLCQRRM) constitute a mitochondrion transit peptide. Positions 178 to 348 (PRSPVVTIMG…IALAEMLELK (171 aa)) constitute a tr-type G domain. Residues 187 to 194 (GHVDHGKT) are G1. 187–194 (GHVDHGKT) contacts GTP. Residues 212-216 (GITQH) are G2. GTP contacts are provided by residues 234-237 (DTPG) and 288-291 (NKCD). A G3 region spans residues 234 to 237 (DTPG). Residues 288–291 (NKCD) are G4. Residues 324–326 (SAL) form a G5 region. The residue at position 688 (T688) is a Phosphothreonine.

This sequence belongs to the TRAFAC class translation factor GTPase superfamily. Classic translation factor GTPase family. IF-2 subfamily. Monomer.

It is found in the mitochondrion. Its function is as follows. One of the essential components for the initiation of protein synthesis. Protects formylmethionyl-tRNA from spontaneous hydrolysis and promotes its binding to the 30S ribosomal subunits. Also involved in the hydrolysis of GTP during the formation of the 70S ribosomal complex. This chain is Translation initiation factor IF-2, mitochondrial (MTIF2), found in Bos taurus (Bovine).